The following is a 206-amino-acid chain: LexA repressor (206 aa).

Residues 28 to 48 constitute a DNA-binding region (H-T-H motif); that stretch reads VREICNAVGLSSTSTVHGHLS. Residues serine 128 and lysine 166 each act as for autocatalytic cleavage activity in the active site.

The protein belongs to the peptidase S24 family. As to quaternary structure, homodimer.

It catalyses the reaction Hydrolysis of Ala-|-Gly bond in repressor LexA.. Represses a number of genes involved in the response to DNA damage (SOS response), including recA and lexA. In the presence of single-stranded DNA, RecA interacts with LexA causing an autocatalytic cleavage which disrupts the DNA-binding part of LexA, leading to derepression of the SOS regulon and eventually DNA repair. The chain is LexA repressor from Ligilactobacillus salivarius (strain UCC118) (Lactobacillus salivarius).